The primary structure comprises 505 residues: Forkhead box protein O4 (505 aa).

Disordered stretches follow at residues 1–66, 175–244, and 257–276; these read MDPE…HSEP, SSWW…SPCP, and RPRS…PMRP. Thr32 bears the Phosphothreonine; by PKB/AKT1 mark. Residues 97-215 are required for interaction with FOXK1; sequence RRNAWGNQSY…RGRSKGPKKK (119 aa). The segment at residues 100–188 is a DNA-binding region (fork-head); it reads AWGNQSYAEL…MLNPDGGKGG (89 aa). A Phosphoserine; by PKB/AKT1 modification is found at Ser197. A compositionally biased stretch (basic residues) spans 205-216; that stretch reads LRGRSKGPKKKP. Residues 257–271 show a composition bias toward polar residues; the sequence is RPRSSSNASTVSTRL. Ser262 is subject to Phosphoserine; by PKB/AKT1.

Interacts with CREBBP/CBP, MYOCD, SIRT1, SRF and YWHAZ. Acetylated by CREBBP/CBP and deacetylated by SIRT1. Binding of YWHAZ inhibits DNA-binding. Interacts with USP7; the interaction is enhanced in presence of hydrogen peroxide and occurs independently of TP53. Interacts with NLK, and this inhibits monoubiquitination and transcriptional activity. Interacts with FOXK1; the interaction inhibits MEF2C transactivation activity. Acetylation by CREBBP/CBP is induced by oxidative stress and inhibits transcriptional activity. Deacetylation by SIRT1 is NAD-dependent and stimulates transcriptional activity. In terms of processing, phosphorylation by PKB/AKT1 inhibits transcriptional activity and is responsible for cytoplasmic localization. May be phosphorylated at multiple sites by NLK. Post-translationally, monoubiquitinated; monoubiquitination is induced by oxidative stress and reduced by deacetylase inhibitors; results in its relocalization to the nucleus and its increased transcriptional activity. Deubiquitinated by USP7; deubiquitination is induced by oxidative stress; enhances its interaction with USP7 and consequently, deubiquitination; increases its translocation to the cytoplasm and inhibits its transcriptional activity. Hydrogene-peroxide-induced ubiquitination and USP7-mediated deubiquitination have no major effect on its protein stability. As to expression, strongly expressed in brown adipose tissue and weakly in white adipose tissue (at protein level). Expressed in skeletal muscle.

It localises to the cytoplasm. The protein localises to the nucleus. Its function is as follows. Transcription factor involved in the regulation of the insulin signaling pathway. Binds to insulin-response elements (IREs) and can activate transcription of IGFBP1. Down-regulates expression of HIF1A and suppresses hypoxia-induced transcriptional activation of HIF1A-modulated genes. Also involved in negative regulation of the cell cycle. Involved in increased proteasome activity in embryonic stem cells (ESCs) by activating expression of PSMD11 in ESCs, leading to enhanced assembly of the 26S proteasome, followed by higher proteasome activity. Represses smooth muscle cell differentiation by inhibiting the transcriptional coactivator activity of myocardin. The polypeptide is Forkhead box protein O4 (Foxo4) (Mus musculus (Mouse)).